The sequence spans 177 residues: Ribulose bisphosphate carboxylase small subunit, chloroplastic 4 (177 aa).

A chloroplast-targeting transit peptide spans M1–S56.

The protein belongs to the RuBisCO small chain family. In terms of assembly, heterohexadecamer of 8 large and 8 small subunits.

Its subcellular location is the plastid. It is found in the chloroplast. RuBisCO catalyzes two reactions: the carboxylation of D-ribulose 1,5-bisphosphate, the primary event in carbon dioxide fixation, as well as the oxidative fragmentation of the pentose substrate. Both reactions occur simultaneously and in competition at the same active site. Although the small subunit is not catalytic it is essential for maximal activity. The protein is Ribulose bisphosphate carboxylase small subunit, chloroplastic 4 of Lemna gibba (Swollen duckweed).